The following is a 315-amino-acid chain: Olfactory receptor 10A4 (315 aa).

At 1–26 the chain is on the extracellular side; that stretch reads MMWENWTIVSEFVLVSFSALSTELQA. A glycan (N-linked (GlcNAc...) asparagine) is linked at asparagine 5. A helical transmembrane segment spans residues 27-47; it reads LLFLLFLTIYLVTLMGNVLII. Residues 48-55 are Cytoplasmic-facing; sequence LVTIADSA. The chain crosses the membrane as a helical span at residues 56 to 76; sequence LQSPMYFFLRNLSFLEIGFNL. At 77–100 the chain is on the extracellular side; the sequence is VIVPKMLGTLIIQDTTISFLGCAT. Cysteine 98 and cysteine 190 are disulfide-bonded. The chain crosses the membrane as a helical span at residues 101-121; that stretch reads QMYFFFFFGAAECCLLATMAY. The Cytoplasmic segment spans residues 122–140; it reads DRYVAICDPLHYPVIMGHI. A helical membrane pass occupies residues 141–161; it reads SCAQLAAASWFSGFSVATVQT. The Extracellular segment spans residues 162 to 198; sequence TWIFSFPFCGPNRVNHFFCDSPPVIALVCADTSVFEL. The helical transmembrane segment at 199–218 threads the bilayer; it reads EALTATVLFILFPFLLILGS. The Cytoplasmic segment spans residues 219–238; that stretch reads YVRILSTIFRMPSAEGKHQA. A helical transmembrane segment spans residues 239-259; it reads FSTCSAHLLVVSLFYSTAILT. The Extracellular segment spans residues 260 to 272; the sequence is YFRPQSSASSESK. The helical transmembrane segment at 273–293 threads the bilayer; it reads KLLSLSSTVVTPMLNPIIYSS. Topologically, residues 294–315 are cytoplasmic; the sequence is RNKEVKAALKRLIHRTLGSQKL.

Belongs to the G-protein coupled receptor 1 family. In terms of tissue distribution, expressed in the tongue.

It localises to the cell membrane. Its function is as follows. Odorant receptor (Potential). May be involved in taste perception. The sequence is that of Olfactory receptor 10A4 (OR10A4) from Homo sapiens (Human).